The primary structure comprises 185 residues: MLTQIKQDAQTRMTKSIDALRHSLTTIRTGRASPALLDGIKVKAYGADTPLNQVASISVSEGRSLVISLFDKGMIKDVEKAIYASDLGLTPTVVGTVIRLNLPPLTEERRKELSKSVHGEGEDSKVAIRNIRRDANQQVKDLLKDKAVTEDEARSAEDDIQKLTDKAIKDVDEVVKGKEQELMTV.

The protein belongs to the RRF family.

It localises to the cytoplasm. Its function is as follows. Responsible for the release of ribosomes from messenger RNA at the termination of protein biosynthesis. May increase the efficiency of translation by recycling ribosomes from one round of translation to another. This is Ribosome-recycling factor from Xanthomonas euvesicatoria pv. vesicatoria (strain 85-10) (Xanthomonas campestris pv. vesicatoria).